A 379-amino-acid chain; its full sequence is Endonuclease III homolog 1, chloroplastic (379 aa).

A chloroplast-targeting transit peptide spans 1 to 54; it reads MILLVNGGAATSIHPNAARFYRIGTMSRQIHGAVSSSKHISLKTQHPLSDSNSE. The region spanning 244–272 is the HhH domain; that stretch reads KYDGDIPSSLDDLLSLPGIGPKMAHLILH. Lysine 265 acts as the Nucleophile; for N-glycosylase activity in catalysis. Residues cysteine 340, cysteine 347, cysteine 350, and cysteine 356 each contribute to the [4Fe-4S] cluster site.

This sequence belongs to the Nth/MutY family. It depends on [4Fe-4S] cluster as a cofactor. As to expression, expressed at low levels in roots, stems, leaves and flowers.

The protein resides in the plastid. It localises to the chloroplast stroma. The protein localises to the chloroplast nucleoid. The enzyme catalyses 2'-deoxyribonucleotide-(2'-deoxyribose 5'-phosphate)-2'-deoxyribonucleotide-DNA = a 3'-end 2'-deoxyribonucleotide-(2,3-dehydro-2,3-deoxyribose 5'-phosphate)-DNA + a 5'-end 5'-phospho-2'-deoxyribonucleoside-DNA + H(+). In terms of biological role, bifunctional DNA N-glycosylase with associated apurinic/apyrimidinic (AP) lyase function that catalyzes the first step in base excision repair (BER), the primary repair pathway for the repair of oxidative DNA damage. The DNA N-glycosylase activity releases the damaged DNA base from DNA by cleaving the N-glycosidic bond, leaving an AP site. The AP lyase activity cleaves the phosphodiester bond 3' to the AP site by a beta-elimination. Primarily recognizes and repairs oxidative base damage of pyrimidines. The chain is Endonuclease III homolog 1, chloroplastic from Arabidopsis thaliana (Mouse-ear cress).